Consider the following 180-residue polypeptide: Putative phycocyanobilin lyase CpcS 2 (180 aa).

Belongs to the CpcS/CpeS biliprotein lyase family.

In terms of biological role, covalently attaches a chromophore to Cys residue(s) of phycobiliproteins (Potential). In vitro does not act as a chromophore lyase for ApcA1, ApcA2, ApcB, ApcD, ApcF, CpcB or PecB, the lyase activity is therefore unsure. The polypeptide is Putative phycocyanobilin lyase CpcS 2 (cpeS2) (Nostoc sp. (strain PCC 7120 / SAG 25.82 / UTEX 2576)).